We begin with the raw amino-acid sequence, 94 residues long: ESAT-6-like protein EsxN (94 aa).

This sequence belongs to the WXG100 family. ESAT-6 subfamily.

The protein localises to the secreted. The polypeptide is ESAT-6-like protein EsxN (Mycobacterium bovis (strain ATCC BAA-935 / AF2122/97)).